Reading from the N-terminus, the 181-residue chain is 3-hexulose-6-phosphate isomerase (181 aa).

The SIS domain occupies 27–168 (ILSLVDAAGR…IAKLVDQKGL (142 aa)). Residues Ser-45 and 84–89 (SGSGST) each bind substrate. The Proton acceptor role is filled by Glu-148.

Belongs to the SIS family. PHI subfamily. As to quaternary structure, homodimer.

It catalyses the reaction D-arabino-hex-3-ulose 6-phosphate = beta-D-fructose 6-phosphate. It participates in one-carbon metabolism; formaldehyde assimilation via RuMP pathway; D-fructose 6-phosphate from D-ribulose 5-phosphate and formaldehyde: step 2/2. Functionally, catalyzes the isomerization between 3-hexulose 6-phosphate and fructose 6-phosphate. In Methylomonas aminofaciens, this protein is 3-hexulose-6-phosphate isomerase (rmpB).